A 213-amino-acid chain; its full sequence is MLSPYGKGTLVTSLLISLLLAGAGLIFPGIVQAVFSTASVGLALFALFFFRDPSRTVPSEPNAVLAPADGRVLLIKKIAHPFTGQNSTLVSIFMSPFNVHVNRIPLQGRIAHLSYSPGKHLMAFNHASMADNERMEIGLENSQCRIIFSQVAGFIARRIVCSLRVGDNVAAGSRFGMITFGSRLDIVVPESTRLTVSKGCKTVAGETVIGYVK.

The Schiff-base intermediate with substrate; via pyruvic acid role is filled by S182. The residue at position 182 (S182) is a Pyruvic acid (Ser); by autocatalysis.

The protein belongs to the phosphatidylserine decarboxylase family. PSD-A subfamily. As to quaternary structure, heterodimer of a large membrane-associated beta subunit and a small pyruvoyl-containing alpha subunit. The cofactor is pyruvate. In terms of processing, is synthesized initially as an inactive proenzyme. Formation of the active enzyme involves a self-maturation process in which the active site pyruvoyl group is generated from an internal serine residue via an autocatalytic post-translational modification. Two non-identical subunits are generated from the proenzyme in this reaction, and the pyruvate is formed at the N-terminus of the alpha chain, which is derived from the carboxyl end of the proenzyme. The post-translation cleavage follows an unusual pathway, termed non-hydrolytic serinolysis, in which the side chain hydroxyl group of the serine supplies its oxygen atom to form the C-terminus of the beta chain, while the remainder of the serine residue undergoes an oxidative deamination to produce ammonia and the pyruvoyl prosthetic group on the alpha chain.

It is found in the cell membrane. It carries out the reaction a 1,2-diacyl-sn-glycero-3-phospho-L-serine + H(+) = a 1,2-diacyl-sn-glycero-3-phosphoethanolamine + CO2. It participates in phospholipid metabolism; phosphatidylethanolamine biosynthesis; phosphatidylethanolamine from CDP-diacylglycerol: step 2/2. Functionally, catalyzes the formation of phosphatidylethanolamine (PtdEtn) from phosphatidylserine (PtdSer). The chain is Phosphatidylserine decarboxylase proenzyme from Chlorobium phaeobacteroides (strain BS1).